The sequence spans 131 residues: Large ribosomal subunit protein bL21 (131 aa).

Positions T106–A116 are enriched in basic and acidic residues. Residues T106–E131 form a disordered region.

It belongs to the bacterial ribosomal protein bL21 family. In terms of assembly, part of the 50S ribosomal subunit. Contacts protein L20.

This protein binds to 23S rRNA in the presence of protein L20. The polypeptide is Large ribosomal subunit protein bL21 (Koribacter versatilis (strain Ellin345)).